Consider the following 294-residue polypeptide: Lipoprotein NlpI (294 aa).

An N-terminal signal peptide occupies residues 1 to 18; sequence MKPFLRWCFVATALTLAG. Cysteine 19 carries the N-palmitoyl cysteine lipid modification. A lipid anchor (S-diacylglycerol cysteine) is attached at cysteine 19. TPR repeat units follow at residues 62-95, 96-129, and 234-267; these read AQLL…RPDM, PEVF…DPTY, and SETN…NVHN.

In terms of assembly, homodimer.

The protein resides in the cell membrane. Functionally, may be involved in cell division. May play a role in bacterial septation or regulation of cell wall degradation during cell division. This chain is Lipoprotein NlpI (nlpI), found in Escherichia coli O157:H7.